Reading from the N-terminus, the 389-residue chain is Large envelope protein (389 aa).

The residue at position 1 (M1) is an N-acetylmethionine. G2 is lipidated: N-myristoyl glycine; by host. The tract at residues 2–108 is pre-S1; it reads GQNLSTSNPL…PPLRDTHPQA (107 aa). The interval 2-163 is pre-S; that stretch reads GQNLSTSNPL…FSRTGDPAPN (162 aa). At 2-170 the chain is on the virion surface; in external conformation side; the sequence is GQNLSTSNPL…APNMESITSG (169 aa). At 2-242 the chain is on the intravirion; in internal conformation side; the sequence is GQNLSTSNPL…PGYRWMCLRR (241 aa). Positions 73–99 are disordered; it reads IITTVPANPPPASTNRQSGRKPTPISP. The interval 109–163 is pre-S2; sequence MHWNSTTFHQALQDPRVRGLYFPAGGSSSGTAYPVPDTASHISSIFSRTGDPAPN. Residues 171–191 form a helical membrane-spanning segment; that stretch reads FLGPLLVLQAGFFLLTKILTI. Over 192-242 the chain is Intravirion; in external conformation; it reads PQSLDSWWTSLNFLGGAPVCLGQNSQSPTSNHSPTSCPPICPGYRWMCLRR. The chain crosses the membrane as a helical span at residues 243 to 263; that stretch reads FIIFLFILLLCLIFLLVLLDY. Residues 264-337 are Virion surface-facing; the sequence is QGMLPVCPLI…WASVRFSWLS (74 aa). N309 carries N-linked (GlcNAc...) asparagine; by host glycosylation. A helical transmembrane segment spans residues 338-358; the sequence is LLAPFVQWFAGLSPTVWLSVI. Residues 359-364 are Intravirion-facing; that stretch reads WMMWYW. The helical transmembrane segment at 365-387 threads the bilayer; that stretch reads GPNLYNILSPFIPLLPIFFCLWV. At 388–389 the chain is on the virion surface side; the sequence is YI.

Belongs to the orthohepadnavirus major surface antigen family. As to quaternary structure, in its internal form (Li-HBsAg), interacts with the capsid protein and with the isoform S. Interacts with host chaperone CANX. Associates with host chaperone CANX through its pre-S2 N glycan; this association may be essential for isoform M proper secretion. In terms of assembly, interacts with isoform L. Interacts with the antigens of satellite virus HDV (HDVAgs); this interaction is required for encapsidation of HDV genomic RNA. Isoform M is N-terminally acetylated by host at a ratio of 90%, and N-glycosylated by host at the pre-S2 region. Post-translationally, myristoylated.

The protein resides in the virion membrane. Functionally, the large envelope protein exists in two topological conformations, one which is termed 'external' or Le-HBsAg and the other 'internal' or Li-HBsAg. In its external conformation the protein attaches the virus to cell receptors and thereby initiating infection. This interaction determines the species specificity and liver tropism. This attachment induces virion internalization predominantly through caveolin-mediated endocytosis. The large envelope protein also assures fusion between virion membrane and endosomal membrane. In its internal conformation the protein plays a role in virion morphogenesis and mediates the contact with the nucleocapsid like a matrix protein. The middle envelope protein plays an important role in the budding of the virion. It is involved in the induction of budding in a nucleocapsid independent way. In this process the majority of envelope proteins bud to form subviral lipoprotein particles of 22 nm of diameter that do not contain a nucleocapsid. The polypeptide is Large envelope protein (Gorilla gorilla (western gorilla)).